We begin with the raw amino-acid sequence, 138 residues long: ATP synthase epsilon chain (138 aa).

It belongs to the ATPase epsilon chain family. In terms of assembly, F-type ATPases have 2 components, CF(1) - the catalytic core - and CF(0) - the membrane proton channel. CF(1) has five subunits: alpha(3), beta(3), gamma(1), delta(1), epsilon(1). CF(0) has three main subunits: a, b and c.

It localises to the cell inner membrane. Functionally, produces ATP from ADP in the presence of a proton gradient across the membrane. This chain is ATP synthase epsilon chain, found in Bartonella henselae (strain ATCC 49882 / DSM 28221 / CCUG 30454 / Houston 1) (Rochalimaea henselae).